Consider the following 150-residue polypeptide: 3-dehydroquinate dehydratase (150 aa).

Tyr26 functions as the Proton acceptor in the catalytic mechanism. Residues Asn77, His83, and Asp90 each contribute to the substrate site. The active-site Proton donor is His103. Residues 104 to 105 (LS) and Arg114 contribute to the substrate site.

Belongs to the type-II 3-dehydroquinase family. In terms of assembly, homododecamer.

It catalyses the reaction 3-dehydroquinate = 3-dehydroshikimate + H2O. It participates in metabolic intermediate biosynthesis; chorismate biosynthesis; chorismate from D-erythrose 4-phosphate and phosphoenolpyruvate: step 3/7. Its function is as follows. Catalyzes a trans-dehydration via an enolate intermediate. The sequence is that of 3-dehydroquinate dehydratase from Pectobacterium atrosepticum (strain SCRI 1043 / ATCC BAA-672) (Erwinia carotovora subsp. atroseptica).